Here is a 399-residue protein sequence, read N- to C-terminus: Integral membrane protein GPR137B (399 aa).

The segment at 1-22 is disordered; that stretch reads MRPERPRPRGSAPGPMETPPWD. The Lumenal portion of the chain corresponds to 1 to 46; sequence MRPERPRPRGSAPGPMETPPWDPARNDSLPPTLTPAVPPYVKLGLT. Asparagine 26 is a glycosylation site (N-linked (GlcNAc...) asparagine). The helical transmembrane segment at 47 to 67 threads the bilayer; the sequence is VVYTVFYALLFVFIYVQLWLV. At 68 to 79 the chain is on the cytoplasmic side; the sequence is LRYRHKRLSYQS. The chain crosses the membrane as a helical span at residues 80-100; it reads VFLFLCLFWASLRTVLFSFYF. Residues 101–111 lie on the Lumenal side of the membrane; the sequence is KDFVAANSLSP. Residues 112-132 traverse the membrane as a helical segment; sequence FVFWLLYCFPVCLQFFTLTLM. The Cytoplasmic segment spans residues 133-159; the sequence is NLYFTQVIFKAKSKYSPELLKYRLPLY. Residues 160-180 form a helical membrane-spanning segment; the sequence is LASLFISLVFLLVNLTCAVLV. Over 181–188 the chain is Lumenal; sequence KTGNWERK. Residues 189–209 form a helical membrane-spanning segment; that stretch reads VIVSVRVAINDTLFVLCAVSL. Residues 210–237 lie on the Cytoplasmic side of the membrane; the sequence is SICLYKISKMSLANIYLESKGSSVCQVT. A helical membrane pass occupies residues 238 to 258; the sequence is AIGVTVILLYTSRACYNLFIL. Residues 259-292 lie on the Lumenal side of the membrane; sequence SFSQNKSVHSFDYDWYNVSDQADLKNQLGDAGYV. N-linked (GlcNAc...) asparagine glycosylation is found at asparagine 263 and asparagine 275. A helical membrane pass occupies residues 293–313; sequence LFGVVLFVWELLPTTLVVYFF. Over 314 to 399 the chain is Cytoplasmic; that stretch reads RVRNPTKDLT…TLDPDKPSLG (86 aa).

The protein belongs to the GPR137 family. In terms of assembly, interaction with RRAGA; increases RRAGA recruitment to lysosomes. Interacts with MTOR; this interaction is amino acid sensitive. As to expression, expressed in kidney, heart, brain and placenta.

Its subcellular location is the lysosome membrane. Functionally, lysosomal integral membrane protein that regulates the localization and activity of mTORC1, a signaling complex promoting cell growth in response to growth factors, energy levels, and amino acids. Interacts with Rag GTPases and increases the lysosomial localization and activity of Rag GTPases and thereby regulates mTORC1 translocation and activity in lysosome. Involved in the regulation of lysosomal morphology and autophagy. Also acts as a negative regulator of osteoclast activity. Involved in interleukin-4-induced M2 macrophage polarization. The polypeptide is Integral membrane protein GPR137B (GPR137B) (Homo sapiens (Human)).